A 1027-amino-acid chain; its full sequence is 2-oxoglutarate dehydrogenase, mitochondrial (1027 aa).

Thiamine diphosphate-binding residues include R315, D413, N446, I448, and Q674. 3 residues coordinate Mg(2+): D413, N446, and I448.

It belongs to the alpha-ketoglutarate dehydrogenase family. As to quaternary structure, homodimer. Component of the 2-oxoglutarate dehydrogenase complex. Requires thiamine diphosphate as cofactor. Mg(2+) is required as a cofactor.

It is found in the mitochondrion matrix. It catalyses the reaction N(6)-[(R)-lipoyl]-L-lysyl-[protein] + 2-oxoglutarate + H(+) = N(6)-[(R)-S(8)-succinyldihydrolipoyl]-L-lysyl-[protein] + CO2. The 2-oxoglutarate dehydrogenase complex catalyzes the overall conversion of 2-oxoglutarate to succinyl-CoA and CO(2). It contains multiple copies of three enzymatic components: 2-oxoglutarate dehydrogenase (E1), dihydrolipoamide succinyltransferase (E2) and lipoamide dehydrogenase (E3). In Caenorhabditis briggsae, this protein is 2-oxoglutarate dehydrogenase, mitochondrial (ogdh-1).